Consider the following 328-residue polypeptide: UDP-glucose 4-epimerase (328 aa).

NAD(+) contacts are provided by residues 20-21 (FV), 41-46 (VRHAVN), 57-58 (DI), 77-81 (CAARA), serine 123, tyrosine 149, and lysine 153. Substrate-binding residues include serine 123 and tyrosine 149. Catalysis depends on tyrosine 149, which acts as the Proton acceptor. Residues 198 to 199 (GI) and 215 to 217 (SIN) each bind substrate.

This sequence belongs to the NAD(P)-dependent epimerase/dehydratase family. Homodimer. It depends on NAD(+) as a cofactor.

It carries out the reaction UDP-alpha-D-glucose = UDP-alpha-D-galactose. It participates in bacterial outer membrane biogenesis; LPS O-antigen biosynthesis. Involved in the metabolism of galactose. Catalyzes the conversion of UDP-galactose (UDP-Gal) to UDP-glucose (UDP-Glc) through a mechanism involving the transient reduction of NAD. In Vibrio cholerae, this protein is UDP-glucose 4-epimerase (galE).